Consider the following 156-residue polypeptide: Acyl carrier protein, mitochondrial (156 aa).

Residues M1–Y68 constitute a mitochondrion transit peptide. Positions E77 to K152 constitute a Carrier domain. At K88 the chain carries N6-acetyllysine. O-(pantetheine 4'-phosphoryl)serine is present on S112.

It belongs to the acyl carrier protein (ACP) family. Mammalian complex I is composed of 45 different subunits. Interacts with ETFRF1. Identified in a complex composed of MALSU1, MIEF1 upstream open reading frame protein and NDUFAB1; within the trimeric complex, MIEF1 upstream open reading frame protein functions as a bridging scaffold that interacts with MALSU1 on one side, and with NDUFAB1 on the other side. The complex interacts with the mitochondrial large ribosomal subunit. Interacts with alpha-1-microglobulin chain; this interaction is required for the maintenance of mitochondrial redox homeostasis. Component of the mitochondrial core iron-sulfur cluster (ISC) complex composed of NFS1, LYRM4, NDUFAB1, ISCU, FXN, and FDX2; this complex is a heterohexamer containing two copies of each monomer. Component of the cyteine desulfurase complex composed of NFS1, LYRM4 and NDUFAB1; this complex contributes to the stability and cysteine desulfurase activity of NFS1. Post-translationally, phosphopantetheinylation at Ser-112 is essential for interactions with LYR motif-containing proteins.

Its subcellular location is the mitochondrion. Functionally, carrier of the growing fatty acid chain in fatty acid biosynthesis. Accessory and non-catalytic subunit of the mitochondrial membrane respiratory chain NADH dehydrogenase (Complex I), which functions in the transfer of electrons from NADH to the respiratory chain. Accessory protein, of the core iron-sulfur cluster (ISC) assembly complex, that regulates, in association with LYRM4, the stability and the cysteine desulfurase activity of NFS1 and participates in the [2Fe-2S] clusters assembly on the scaffolding protein ISCU. The core iron-sulfur cluster (ISC) assembly complex is involved in the de novo synthesis of a [2Fe-2S] cluster, the first step of the mitochondrial iron-sulfur protein biogenesis. This process is initiated by the cysteine desulfurase complex (NFS1:LYRM4:NDUFAB1) that produces persulfide which is delivered on the scaffold protein ISCU in a FXN-dependent manner. Then this complex is stabilized by FDX2 which provides reducing equivalents to accomplish the [2Fe-2S] cluster assembly. Finally, the [2Fe-2S] cluster is transferred from ISCU to chaperone proteins, including HSCB, HSPA9 and GLRX5. In Gorilla gorilla gorilla (Western lowland gorilla), this protein is Acyl carrier protein, mitochondrial.